Consider the following 152-residue polypeptide: Dehydratase aurZ (152 aa).

Residues 34–129 (PSLSEKEYRH…APDHVNFADT (96 aa)) form the EthD domain.

It belongs to the tpcK family.

The catalysed reaction is naphtopyrone YWA1 = norrubrofusarin + H2O + H(+). It functions in the pathway pigment biosynthesis. Its function is as follows. Dehydratase; part of the gene cluster that mediates the biosynthesis of aurofusarin, a red mycelium pigment which is acting as a mycotoxin. The first step is performed by the polyketide synthase which condenses one acetyl-CoA and 6 malonyl-CoA units to form the first intermediate, the cyclic heptaketide and yellow pigment YWA1. The C2 hydroxyl group in the pyrone ring of YWA1 is probably formed during ring closure by an aldol-type cyclization reaction. The dehydratase aurZ then acts as the first tailoring enzyme in the aurofusarin biosynthetic pathway by converting YWA1 to nor-rubrofusarin. Nor-rubrofusarin is then methylated to rubrofusarin by the O-methyltransferase aurJ. Rubrofusarin is then transported across the plasma membrane by the rubrofusarin-specific pump aurT for further enzymatic processing by the extracellular complex composed of GIP1, aurF, aurO and aurS to yield aurofusarin. The polypeptide is Dehydratase aurZ (Gibberella zeae (strain ATCC MYA-4620 / CBS 123657 / FGSC 9075 / NRRL 31084 / PH-1) (Wheat head blight fungus)).